The chain runs to 31 residues: Cyclotide mden-K (31 aa).

The cyclopeptide (Gly-Asn) cross-link spans 1 to 31 (GSIPCGESCVWIPCISSVVGCACKNKVCYKN). 3 disulfides stabilise this stretch: Cys-5/Cys-21, Cys-9/Cys-23, and Cys-14/Cys-28.

Belongs to the cyclotide family. Bracelet subfamily. This is a cyclic peptide.

Its function is as follows. Probably participates in a plant defense mechanism. The sequence is that of Cyclotide mden-K from Melicytus dentatus (Tree violet).